Reading from the N-terminus, the 78-residue chain is UPF0349 protein GK2958 (78 aa).

Belongs to the UPF0349 family.

The sequence is that of UPF0349 protein GK2958 from Geobacillus kaustophilus (strain HTA426).